The chain runs to 164 residues: Transcription elongation factor GreA (164 aa).

A coiled-coil region spans residues 50–75 (YHAAREEQGQQEARIRQLQDLLNIAK).

The protein belongs to the GreA/GreB family.

Functionally, necessary for efficient RNA polymerase transcription elongation past template-encoded arresting sites. The arresting sites in DNA have the property of trapping a certain fraction of elongating RNA polymerases that pass through, resulting in locked ternary complexes. Cleavage of the nascent transcript by cleavage factors such as GreA or GreB allows the resumption of elongation from the new 3'terminus. GreA releases sequences of 2 to 3 nucleotides. This is Transcription elongation factor GreA from Mycobacterium leprae (strain Br4923).